Consider the following 281-residue polypeptide: Pantothenate synthetase (281 aa).

30-37 (MGALHHGH) is an ATP binding site. H37 (proton donor) is an active-site residue. Q61 is a binding site for (R)-pantoate. Q61 provides a ligand contact to beta-alanine. Residue 147-150 (GEKD) coordinates ATP. Q153 serves as a coordination point for (R)-pantoate. ATP-binding positions include L176 and 184-187 (SSSR).

It belongs to the pantothenate synthetase family. As to quaternary structure, homodimer.

Its subcellular location is the cytoplasm. It carries out the reaction (R)-pantoate + beta-alanine + ATP = (R)-pantothenate + AMP + diphosphate + H(+). It participates in cofactor biosynthesis; (R)-pantothenate biosynthesis; (R)-pantothenate from (R)-pantoate and beta-alanine: step 1/1. Its function is as follows. Catalyzes the condensation of pantoate with beta-alanine in an ATP-dependent reaction via a pantoyl-adenylate intermediate. This is Pantothenate synthetase from Bartonella bacilliformis (strain ATCC 35685 / KC583 / Herrer 020/F12,63).